The following is a 115-amino-acid chain: Macroconotoxin Mu8.1 (115 aa).

A signal peptide spans 1-21 (MDMKMTFSGLVLVVLVTTVVG). A propeptide spanning residues 22–26 (SSVRR) is cleaved from the precursor. Intrachain disulfides connect cysteine 36-cysteine 77, cysteine 44-cysteine 60, cysteine 48-cysteine 56, cysteine 83-cysteine 115, and cysteine 87-cysteine 97. Glutamate 40 lines the Zn(2+) pocket. Position 68 (histidine 68) interacts with Zn(2+).

Mostly found as a homodimer in solution; non-covalently bound. In terms of tissue distribution, expressed by the venom duct.

Its subcellular location is the secreted. Functionally, modestly and reversibly inhibits Cav2.3/CACNA1E (IC(50)=5.8 uM) recombinantly expressed in HEK293 cells without affecting the voltage dependence of activation. In mouse DRG sensory neurons, modulates depolarization-induced calcium influx. The chain is Macroconotoxin Mu8.1 from Conus mucronatus (Pointed cone).